The sequence spans 758 residues: Vitamin K-dependent gamma-carboxylase (758 aa).

Residues 1 to 34 (MAVSARPARAPRGSDKVKKDKAAQTSGPRQGSRM) form a disordered region. Ala2 is modified (N-acetylalanine). Over 2–60 (AVSARPARAPRGSDKVKKDKAAQTSGPRQGSRMGKLLGFEWTDVSSWERLVTLLNRPTD) the chain is Cytoplasmic. A compositionally biased stretch (basic and acidic residues) spans 12–22 (RGSDKVKKDKA). Residues 61–81 (PAGLAVFRFLFGLMMVLDIPQ) form a helical membrane-spanning segment. The Lumenal segment spans residues 82–113 (ERGLSSLDRRYLDGLEVCRFPLLDALQPLPLD). Cys99 and Cys450 are joined by a disulfide. The helical transmembrane segment at 114–134 (WMYLIYTIMFLGALGMMLGLC) threads the bilayer. The Cytoplasmic portion of the chain corresponds to 135-136 (YR). The helical transmembrane segment at 137 to 157 (ISCVLFLLPYWYVFLLDKTSW) threads the bilayer. Residues 158–292 (NNHSYLYGLL…VSYFHCMNSQ (135 aa)) lie on the Lumenal side of the membrane. The helical transmembrane segment at 293-313 (LFSIGMFPYVMLASSPLFCSP) threads the bilayer. The Cytoplasmic segment spans residues 314 to 363 (EWPRKLVAHCPKKLQELLPLRTAPQPSTSCMYKRSRARGSQKPGLRHKLS). A helical membrane pass occupies residues 364–384 (TAFTLLYLLEQLFLPYSHFLT). Residues 385 to 758 (QGYNNWTNGL…PDSHPVHSEF (374 aa)) lie on the Lumenal side of the membrane. Residues 727–758 (PFEPAGEPSPVNTDSSNPNPPEPDSHPVHSEF) are disordered. A compositionally biased stretch (basic and acidic residues) spans 749–758 (PDSHPVHSEF).

In terms of assembly, monomer. May interact with CALU. In terms of processing, the N-terminus is blocked.

Its subcellular location is the endoplasmic reticulum membrane. The enzyme catalyses 4-carboxy-L-glutamyl-[protein] + 2,3-epoxyphylloquinone + H2O + H(+) = phylloquinol + L-glutamyl-[protein] + CO2 + O2. Functionally, mediates the vitamin K-dependent carboxylation of glutamate residues to calcium-binding gamma-carboxyglutamate (Gla) residues with the concomitant conversion of the reduced hydroquinone form of vitamin K to vitamin K epoxide. Catalyzes gamma-carboxylation of various proteins, such as blood coagulation factors (F2, F7, F9 and F10), osteocalcin (BGLAP) or matrix Gla protein (MGP). This chain is Vitamin K-dependent gamma-carboxylase (GGCX), found in Bos taurus (Bovine).